The chain runs to 486 residues: ATP synthase subunit beta (486 aa).

164–171 (GGAGVGKT) is an ATP binding site.

Belongs to the ATPase alpha/beta chains family. In terms of assembly, F-type ATPases have 2 components, CF(1) - the catalytic core - and CF(0) - the membrane proton channel. CF(1) has five subunits: alpha(3), beta(3), gamma(1), delta(1), epsilon(1). CF(0) has four main subunits: a(1), b(1), b'(1) and c(9-12).

It is found in the cellular thylakoid membrane. The enzyme catalyses ATP + H2O + 4 H(+)(in) = ADP + phosphate + 5 H(+)(out). In terms of biological role, produces ATP from ADP in the presence of a proton gradient across the membrane. The catalytic sites are hosted primarily by the beta subunits. The sequence is that of ATP synthase subunit beta from Prochlorococcus marinus (strain AS9601).